A 100-amino-acid polypeptide reads, in one-letter code: Urease subunit gamma (100 aa).

The protein belongs to the urease gamma subunit family. As to quaternary structure, heterotrimer of UreA (gamma), UreB (beta) and UreC (alpha) subunits. Three heterotrimers associate to form the active enzyme.

The protein localises to the cytoplasm. It carries out the reaction urea + 2 H2O + H(+) = hydrogencarbonate + 2 NH4(+). Its pathway is nitrogen metabolism; urea degradation; CO(2) and NH(3) from urea (urease route): step 1/1. The sequence is that of Urease subunit gamma from Prochlorococcus marinus (strain NATL2A).